We begin with the raw amino-acid sequence, 64 residues long: Large ribosomal subunit protein bL35 (64 aa).

Belongs to the bacterial ribosomal protein bL35 family.

This is Large ribosomal subunit protein bL35 from Ureaplasma parvum serovar 3 (strain ATCC 27815 / 27 / NCTC 11736).